The sequence spans 164 residues: Nucleotide-binding protein Emin_0136 (164 aa).

Belongs to the YajQ family.

Nucleotide-binding protein. The protein is Nucleotide-binding protein Emin_0136 of Elusimicrobium minutum (strain Pei191).